The chain runs to 555 residues: Glucosylglycerate phosphorylase (555 aa).

D231 serves as the catalytic Nucleophile.

This sequence belongs to the glycosyl hydrolase 13 family. Glucosylglycerate phosphorylase subfamily.

The enzyme catalyses (2R)-2-O-(alpha-D-glucopyranosyl)-glycerate + phosphate = (R)-glycerate + alpha-D-glucose 1-phosphate. Its function is as follows. Catalyzes the reversible phosphorolysis of glucosylglycerate into alpha-D-glucose 1-phosphate (Glc1P) and D-glycerate. May be a regulator of intracellular levels of glucosylglycerate, a compatible solute that primarily protects organisms facing salt stress and very specific nutritional constraints. Has a very strict substrate specificity. Cannot catalyze the phosphorolysis of sucrose or synthesize sucrose from Glc1P and D-fructose. The protein is Glucosylglycerate phosphorylase of Allomeiothermus silvanus (strain ATCC 700542 / DSM 9946 / NBRC 106475 / NCIMB 13440 / VI-R2) (Thermus silvanus).